The primary structure comprises 156 residues: Ribosome maturation factor RimP (156 aa).

It belongs to the RimP family.

It localises to the cytoplasm. In terms of biological role, required for maturation of 30S ribosomal subunits. This is Ribosome maturation factor RimP from Lachnospira eligens (strain ATCC 27750 / DSM 3376 / VPI C15-48 / C15-B4) (Eubacterium eligens).